Reading from the N-terminus, the 309-residue chain is MITIIGSGRVGTAAAVIMGLMKLDNKILLIDIVKGLPQGEALDMNHMSSILGLDVEYVGSNEYKDIEGSDLIIVTAGLPRKPGMTREQLLEANAKIVAEIGREIKKYAPDSIVILTTNPLDAMTYVMWKATGFPRERVIGFSGVLDAGRLAFYAAKKLGISPASILPIVLGQHGESMFPVPSKSYVHGVPLSKLLTEEQLKEVVEETVKAGARITELRGFSSNWGPGAGLAIMAEAVKRDAKRALIASVVLQGEYGVRDVPVEVPIILGRSGVVKVLEVELTEEERQKFMQSVEAVKKLVASVPPSYLQ.

Residues 6–11 and D31 contribute to the NAD(+) site; that span reads GSGRVG. The substrate site is built by R80 and R86. Residues N93 and 116 to 118 each bind NAD(+); that span reads TTN. 2 residues coordinate substrate: N118 and R149. The active-site Proton acceptor is H173.

The protein belongs to the LDH/MDH superfamily.

The enzyme catalyses (S)-malate + NAD(+) = oxaloacetate + NADH + H(+). Functionally, catalyzes the reversible oxidation of malate to oxaloacetate. The sequence is that of Malate dehydrogenase (mdh) from Pyrobaculum aerophilum (strain ATCC 51768 / DSM 7523 / JCM 9630 / CIP 104966 / NBRC 100827 / IM2).